We begin with the raw amino-acid sequence, 92 residues long: Small ribosomal subunit protein uS19 (92 aa).

The protein belongs to the universal ribosomal protein uS19 family.

Its function is as follows. Protein S19 forms a complex with S13 that binds strongly to the 16S ribosomal RNA. The chain is Small ribosomal subunit protein uS19 (rpsS) from Geobacillus stearothermophilus (Bacillus stearothermophilus).